We begin with the raw amino-acid sequence, 226 residues long: UPF0758 protein Spy49_0870 (226 aa).

In terms of domain architecture, MPN spans 103 to 225; that stretch reads SVLTSVQVAE…YYSFREKSTL (123 aa). The Zn(2+) site is built by His174, His176, and Asp187. The JAMM motif signature appears at 174-187; sequence HNHPSGNIEPSSND.

It belongs to the UPF0758 family.

The polypeptide is UPF0758 protein Spy49_0870 (Streptococcus pyogenes serotype M49 (strain NZ131)).